A 422-amino-acid polypeptide reads, in one-letter code: Cytokine receptor-like factor 1 (422 aa).

The N-terminal stretch at 1–37 is a signal peptide; the sequence is MPAGRRGPAAQSARRPPPLLPLLLLLCVLGAPRAGSG. The 94-residue stretch at 38 to 131 folds into the Ig-like C2-type domain; sequence AHTAVISPQD…SILAGSCLYV (94 aa). N-linked (GlcNAc...) asparagine glycans are attached at residues Asn-92, Asn-104, and Asn-140. 2 consecutive Fibronectin type-III domains span residues 137-232 and 237-341; these read KPVN…ILDV and PPPD…TPRS. Cys-143 and Cys-153 are disulfide-bonded. Asn-168 carries an N-linked (GlcNAc...) asparagine glycan. Cys-184 and Cys-195 are disulfide-bonded. Phosphoserine is present on Ser-219. Asn-292 carries an N-linked (GlcNAc...) asparagine glycan. The short motif at 327-331 is the WSXWS motif element; sequence WSEWS. Residues 332 to 363 are disordered; the sequence is HPTAASTPRSERPGPGGGACEPRGGEPSSGPV. Asn-382 is a glycosylation site (N-linked (GlcNAc...) asparagine). The disordered stretch occupies residues 399-422; it reads HKTRNQDEGILPSGRRGTARGPAR.

This sequence belongs to the type I cytokine receptor family. Type 3 subfamily. Forms covalent di- and tetramers. Forms a heteromeric complex with cardiotrophin-like cytokine CLCF1/CLC; the CRLF1-CLCF1 complex is a ligand for the ciliary neurotrophic factor receptor/CNTFR. The CRLF1-CLCF1 heterodimer binds SORL1 (via N-terminal ectodomain); within this complex, the interaction is mediated predominantly by the CRLF1 moiety. The tripartite signaling complex formed by CRLF1, CLCF1 and CNTFR also binds SORL1. Highest levels of expression observed in spleen, thymus, lymph node, appendix, bone marrow, stomach, placenta, heart, thyroid and ovary. Strongly expressed also in fetal lung.

Its subcellular location is the secreted. In terms of biological role, in complex with CLCF1, forms a heterodimeric neurotropic cytokine that plays a crucial role during neuronal development. May also play a regulatory role in the immune system. In Homo sapiens (Human), this protein is Cytokine receptor-like factor 1 (CRLF1).